A 733-amino-acid chain; its full sequence is Polyribonucleotide nucleotidyltransferase (733 aa).

Mg(2+) is bound by residues D488 and D494. One can recognise a KH domain in the interval 555 to 614 (PRIEVMNIAVDKIRDVIGTGGKVIREIVEQTGAKINIEDDGTIRIASADAKTIEAAKRWI). In terms of domain architecture, S1 motif spans 624-692 (GVIYQGTVVK…ERGKVRLSMK (69 aa)). A compositionally biased stretch (basic and acidic residues) spans 711–722 (EQEKYTEETHKS). The tract at residues 711 to 733 (EQEKYTEETHKSENKRRRKKKEE) is disordered. The segment covering 723–733 (ENKRRRKKKEE) has biased composition (basic residues).

This sequence belongs to the polyribonucleotide nucleotidyltransferase family. The cofactor is Mg(2+).

The protein resides in the cytoplasm. The catalysed reaction is RNA(n+1) + phosphate = RNA(n) + a ribonucleoside 5'-diphosphate. In terms of biological role, involved in mRNA degradation. Catalyzes the phosphorolysis of single-stranded polyribonucleotides processively in the 3'- to 5'-direction. The chain is Polyribonucleotide nucleotidyltransferase from Bartonella henselae (strain ATCC 49882 / DSM 28221 / CCUG 30454 / Houston 1) (Rochalimaea henselae).